The sequence spans 29 residues: Potassium channel toxin alpha-KTx 8.3 (29 aa).

Disulfide bonds link C3–C19, C6–C24, and C10–C26.

Belongs to the short scorpion toxin superfamily. Potassium channel inhibitor family. Alpha-KTx 08 subfamily. Expressed by the venom gland.

The protein localises to the secreted. Functionally, specific and potent inhibitor of ClC-2/CLCN2 chloride channel. It slows ClC-2/CLCN2 activation by increasing the latency to first opening by nearly 8-fold but is unable to inhibit open channels, suggesting that this toxin inhibits channel activation gating. The chain is Potassium channel toxin alpha-KTx 8.3 from Leiurus hebraeus (Hebrew deathstalker scorpion).